A 316-amino-acid chain; its full sequence is IPDLASSRSTLPVLTKGPTGLLGPRGPYGPLQRFNIELSARGPAAVVGVLGKSFDSWLTKLGLPGPQGRPGPPGPGCRFALSNQCIKLAVEFAGQSKFSSFLANEGKKEGPEGEEGPRTEFDGAYFAGGKFPVVGKPFPQLKVFHAEPPFPTSRSTYGPSGSQPGKKGVVTPFKGNQPLKFNDFLVESDSRCPPDDSSFERSPAVSGHSSPATLNSRMKPAGFPGKGNGAPLKNGIASDPLENLKNRLGSCFPDVLDEPPTSPFFTGPSGYTSDGLNKTPTVSKTLTAAGDPGPGAGKVLESSKTDLVALQGEFQR.

4 disordered regions span residues 1–26, 149–173, 189–238, and 259–278; these read IPDL…GPRG, PFPT…VTPF, DSRC…GIAS, and PPTS…GLNK. A compositionally biased stretch (low complexity) spans 10–26; it reads TLPVLTKGPTGLLGPRG. Composition is skewed to polar residues over residues 152–163, 207–216, and 269–278; these read TSRSTYGPSGSQ, GHSSPATLNS, and SGYTSDGLNK.

In terms of processing, glycosylated; contains mainly glucose, galactose, galactosamine, glucosamine and glucuronic acid. Component of the acid-soluble organic matrix of nacreous shell layers (at protein level).

Its subcellular location is the secreted. Its function is as follows. Involved in nacre formation. Affects morphology of calcite crystals in vitro but does not inhibit their formation. Binds chitin. This is Nautilin-63 from Nautilus macromphalus (Bellybutton nautilus).